We begin with the raw amino-acid sequence, 547 residues long: Probable hydroxyacid-oxoacid transhydrogenase, mitochondrial (547 aa).

The protein belongs to the iron-containing alcohol dehydrogenase family. Hydroxyacid-oxoacid transhydrogenase subfamily.

The protein localises to the mitochondrion. The catalysed reaction is (S)-3-hydroxybutanoate + 2-oxoglutarate = (R)-2-hydroxyglutarate + acetoacetate. It carries out the reaction 4-hydroxybutanoate + 2-oxoglutarate = (R)-2-hydroxyglutarate + succinate semialdehyde. Its function is as follows. Catalyzes the cofactor-independent reversible oxidation of gamma-hydroxybutyrate (GHB) to succinic semialdehyde (SSA) coupled to reduction of 2-ketoglutarate (2-KG) to D-2-hydroxyglutarate (D-2-HG). L-3-hydroxybutyrate (L-3-OHB) is also a substrate for HOT when using 2-KG as hydrogen acceptor, resulting in the formation of D-2-HG. This chain is Probable hydroxyacid-oxoacid transhydrogenase, mitochondrial (adhfe1), found in Dictyostelium discoideum (Social amoeba).